The chain runs to 760 residues: ER membrane protein complex subunit 1 (760 aa).

A signal peptide spans 1 to 24; the sequence is MKITCTDLVYVFILLFLNTSCVQA. Over 25–723 the chain is Lumenal; sequence VFSDDAFITD…PSGQFDLMSP (699 aa). N-linked (GlcNAc...) asparagine glycans are attached at residues asparagine 73, asparagine 106, asparagine 192, asparagine 202, asparagine 420, asparagine 443, asparagine 574, and asparagine 578. Residues 724 to 744 form a helical membrane-spanning segment; it reads TFEKGKLLITIFVLLVITYFI. The Cytoplasmic portion of the chain corresponds to 745–760; sequence RPSVSNKKLKSQWLIK.

Belongs to the EMC1 family. In terms of assembly, component of the ER membrane protein complex (EMC), which is composed of EMC1, EMC2, EMC3, EMC4, EMC5 and EMC6. N-glycosylated.

The protein resides in the endoplasmic reticulum membrane. Part of the endoplasmic reticulum membrane protein complex (EMC) that enables the energy-independent insertion into endoplasmic reticulum membranes of newly synthesized membrane proteins. Preferentially accommodates proteins with transmembrane domains that are weakly hydrophobic or contain destabilizing features such as charged and aromatic residues. Involved in the cotranslational insertion of multi-pass membrane proteins in which stop-transfer membrane-anchor sequences become ER membrane spanning helices. It is also required for the post-translational insertion of tail-anchored/TA proteins in endoplasmic reticulum membranes. By mediating the proper cotranslational insertion of N-terminal transmembrane domains in an N-exo topology, with translocated N-terminus in the lumen of the ER, controls the topology of multi-pass membrane proteins. The sequence is that of ER membrane protein complex subunit 1 (EMC1) from Saccharomyces cerevisiae (strain ATCC 204508 / S288c) (Baker's yeast).